We begin with the raw amino-acid sequence, 275 residues long: Putative protein A464R (275 aa).

An RNase III domain is found at 51 to 175 (KEDVEYLIGM…LMGAIYFDLG (125 aa)). The DRBM domain maps to 201-269 (NYKDRLLKHT…SKIALHTMGV (69 aa)).

This sequence belongs to the ribonuclease III family.

The polypeptide is Putative protein A464R (Chlorella (PBCV-1)).